The following is a 417-amino-acid chain: UDP-N-acetylglucosamine 1-carboxyvinyltransferase (417 aa).

22–23 is a binding site for phosphoenolpyruvate; the sequence is KN. Position 93 (Arg93) interacts with UDP-N-acetyl-alpha-D-glucosamine. The active-site Proton donor is the Cys117. Cys117 carries the post-translational modification 2-(S-cysteinyl)pyruvic acid O-phosphothioketal. The UDP-N-acetyl-alpha-D-glucosamine site is built by Asp304 and Ile326.

This sequence belongs to the EPSP synthase family. MurA subfamily.

The protein localises to the cytoplasm. It carries out the reaction phosphoenolpyruvate + UDP-N-acetyl-alpha-D-glucosamine = UDP-N-acetyl-3-O-(1-carboxyvinyl)-alpha-D-glucosamine + phosphate. It participates in cell wall biogenesis; peptidoglycan biosynthesis. In terms of biological role, cell wall formation. Adds enolpyruvyl to UDP-N-acetylglucosamine. In Neisseria gonorrhoeae (strain ATCC 700825 / FA 1090), this protein is UDP-N-acetylglucosamine 1-carboxyvinyltransferase.